The primary structure comprises 129 residues: MSGRGKQGGKARAKAKSRSSRAGLQFPVGRVHRLLRKGNYAERVGAGAPVYMAAVLEYLTAEILELAGNAARDNKKTRIIPRHLQLAIRNDEELNKLLGKVTIAQGGVLPNIQAVLLPKKTESHKAKSK.

A disordered region spans residues methionine 1 to alanine 22. Serine 2 carries the N-acetylserine modification. A Phosphoserine; by RPS6KA5 modification is found at serine 2. At arginine 4 the chain carries Citrulline; alternate. Symmetric dimethylarginine; by PRMT5; alternate is present on arginine 4. 2 positions are modified to N6-(2-hydroxyisobutyryl)lysine; alternate: lysine 6 and lysine 10. The residue at position 6 (lysine 6) is an N6-acetyllysine; alternate. A compositionally biased stretch (basic residues) spans glutamine 7–serine 19. N6-lactoyllysine; alternate is present on lysine 10. Lysine 10 carries the N6-succinyllysine; alternate modification. Glycyl lysine isopeptide (Lys-Gly) (interchain with G-Cter in ubiquitin) cross-links involve residues lysine 14 and lysine 16. Lysine 37 carries the post-translational modification N6-(2-hydroxyisobutyryl)lysine; alternate. Position 37 is an N6-(beta-hydroxybutyryl)lysine; alternate (lysine 37). At lysine 37 the chain carries N6-crotonyllysine; alternate. N6-(2-hydroxyisobutyryl)lysine occurs at positions 75 and 76. An N6-(2-hydroxyisobutyryl)lysine; alternate modification is found at lysine 96. Lysine 96 is subject to N6-succinyllysine; alternate. Lysine 96 is subject to N6-glutaryllysine; alternate. Position 100 is an N6-glutaryllysine (lysine 100). Position 105 is an N5-methylglutamine (glutamine 105). Lysine 119 is modified (N6-(2-hydroxyisobutyryl)lysine; alternate). Lysine 119 and lysine 120 each carry N6-crotonyllysine; alternate. Lysine 119 and lysine 120 each carry N6-glutaryllysine; alternate. Residue lysine 120 forms a Glycyl lysine isopeptide (Lys-Gly) (interchain with G-Cter in ubiquitin); alternate linkage. Threonine 121 is modified (phosphothreonine; by DCAF1). Serine 123 bears the Phosphoserine mark. Lysine 125 is modified (N6-crotonyllysine).

Belongs to the histone H2A family. The nucleosome is a histone octamer containing two molecules each of H2A, H2B, H3 and H4 assembled in one H3-H4 heterotetramer and two H2A-H2B heterodimers. The octamer wraps approximately 147 bp of DNA. In terms of processing, deiminated on Arg-4 in granulocytes upon calcium entry. Monoubiquitination of Lys-120 (H2AK119Ub) by RING1, TRIM37 and RNF2/RING2 complex gives a specific tag for epigenetic transcriptional repression and participates in X chromosome inactivation of female mammals. It is involved in the initiation of both imprinted and random X inactivation. Ubiquitinated H2A is enriched in inactive X chromosome chromatin. Ubiquitination of H2A functions downstream of methylation of 'Lys-27' of histone H3 (H3K27me). H2AK119Ub by RNF2/RING2 can also be induced by ultraviolet and may be involved in DNA repair. Following DNA double-strand breaks (DSBs), it is ubiquitinated through 'Lys-63' linkage of ubiquitin moieties by the E2 ligase UBE2N and the E3 ligases RNF8 and RNF168, leading to the recruitment of repair proteins to sites of DNA damage. Ubiquitination at Lys-14 and Lys-16 (H2AK13Ub and H2AK15Ub, respectively) in response to DNA damage is initiated by RNF168 that mediates monoubiquitination at these 2 sites, and 'Lys-63'-linked ubiquitin are then conjugated to monoubiquitin; RNF8 is able to extend 'Lys-63'-linked ubiquitin chains in vitro. H2AK119Ub and ionizing radiation-induced 'Lys-63'-linked ubiquitination (H2AK13Ub and H2AK15Ub) are distinct events. Post-translationally, phosphorylation on Ser-2 (H2AS1ph) is enhanced during mitosis. Phosphorylation on Ser-2 by RPS6KA5/MSK1 directly represses transcription. Acetylation of H3 inhibits Ser-2 phosphorylation by RPS6KA5/MSK1. Phosphorylation at Thr-121 (H2AT120ph) by DCAF1 is present in the regulatory region of many tumor suppresor genes and down-regulates their transcription. In terms of processing, symmetric dimethylation on Arg-4 by the PRDM1/PRMT5 complex may play a crucial role in the germ-cell lineage. Glutamine methylation at Gln-105 (H2AQ104me) by FBL is specifically dedicated to polymerase I. It is present at 35S ribosomal DNA locus and impairs binding of the FACT complex. Post-translationally, crotonylation (Kcr) is specifically present in male germ cells and marks testis-specific genes in post-meiotic cells, including X-linked genes that escape sex chromosome inactivation in haploid cells. Crotonylation marks active promoters and enhancers and confers resistance to transcriptional repressors. It is also associated with post-meiotically activated genes on autosomes. In terms of processing, lactylated in macrophages by EP300/P300 by using lactoyl-CoA directly derived from endogenous or exogenous lactate, leading to stimulates gene transcription.

The protein localises to the nucleus. It is found in the chromosome. In terms of biological role, core component of nucleosome. Nucleosomes wrap and compact DNA into chromatin, limiting DNA accessibility to the cellular machineries which require DNA as a template. Histones thereby play a central role in transcription regulation, DNA repair, DNA replication and chromosomal stability. DNA accessibility is regulated via a complex set of post-translational modifications of histones, also called histone code, and nucleosome remodeling. The polypeptide is Histone H2A type 2-C (Bos taurus (Bovine)).